Here is a 118-residue protein sequence, read N- to C-terminus: T cell receptor gamma variable 2 (118 aa).

An N-terminal signal peptide occupies residues 1-17 (MQWALAVLLAFLSPASQ). The Ig-like domain occupies 18 to 118 (KSSNLEGRTK…GVYYCATWDG (101 aa)). An intrachain disulfide couples cysteine 41 to cysteine 113.

Gamma-delta TR is a heterodimer composed of a gamma and delta chain; disulfide-linked. The gamma-delta TR is associated with the transmembrane signaling CD3 coreceptor proteins following the stoichiometry: a single gamma-delta TR heterodimer associates with one CD3D-CD3E heterodimer, one CD3G-CD3E heterodimer and one CD247 homodimer forming a stable octameric structure. Upon activation, gamma-delta TR complex associates with FCER1G to initiate intracellular signaling.

The protein resides in the cell membrane. V region of the variable domain of T cell receptor (TR) gamma chain that participates in the antigen recognition. Gamma-delta TRs recognize a variety of self and foreign non-peptide antigens frequently expressed at the epithelial boundaries between the host and external environment, including endogenous lipids presented by MH-like protein CD1D and phosphoantigens presented by butyrophilin-like molecule BTN3A1. Upon antigen recognition induces rapid, innate-like immune responses involved in pathogen clearance and tissue repair. Binding of gamma-delta TR complex to antigen triggers phosphorylation of immunoreceptor tyrosine-based activation motifs (ITAMs) in the CD3 chains by the LCK and FYN kinases, allowing the recruitment, phosphorylation, and activation of ZAP70 that facilitates phosphorylation of the scaffolding proteins LCP2 and LAT. This lead to the formation of a supramolecular signalosome that recruits the phospholipase PLCG1, resulting in calcium mobilization and ERK activation, ultimately leading to T cell expansion and differentiation into effector cells. Gamma-delta TRs are produced through somatic rearrangement of a limited repertoire of variable (V), diversity (D), and joining (J) genes. The potential diversity of gamma-delta TRs is conferred by the unique ability to rearrange (D) genes in tandem and to utilize all three reading frames. The combinatorial diversity is considerably increased by the sequence exonuclease trimming and random nucleotide (N) region additions which occur during the V-(D)-J rearrangements. This is T cell receptor gamma variable 2 from Homo sapiens (Human).